A 1417-amino-acid chain; its full sequence is MVSFFKTPIFILIIFLYLNEKVICSINENQNENDTISQNVNQHENINQNVNDNDNIEQLKSMIGNDELHKNLTILEKLILESLEKDKLKYPLLKQGTEQLIDISKFNKKNITDADDETYIIPTVQSSFHDIVKYEHLIKEQSIEIYNSDISDKIKKKIFIVRTLKTIKLMLIPLNSYKQNNDLKSALEELNNVFTNKEAQKESSPIGDHGTFFRKLLTHVRTIKENEDIENKGETLILGDNKIDVMNSNDFFFTTNSNVKFMENLDDITNQYGLGLINHLGPHLIALGHFTVLKLALKNYKNYFEAKSIKFFSWQKILEFSMSDRFKVLDMMCNHESVYYSEKKRRKTYLKVDRSSTSMECNILEYLLHYFNKYQLEIIKTTQDTDFDLHGMMEHKYIKDYFFSFMCNDPKECIIYHTNQFKKEANEENTFPEQEEPNREISAYNLYLNYYYFMKRYSSYGVKKTLYVHLLNLTGLLNYDTRSYVTSLYLPGYYNAVEMSFTEEKEFSKLFESLIQCIEKCHSDQARQISKDSNLLNDITKCDLCKGAFLYSNMKFDEVPSMLQKFYLYLTKGLKIQKVSSLIKTLDIYQDYSNYLSHDINWYTFLFLFRLTSFKEISKKNVAEAMYLNIKDEDTFNKTVVTNYWYPSPIKKYYTLYVRKHIPNNLVDELEKLMKSGTLEKMKKSLTFLVHVNSFLQLDFFHQLNEPPLGLPRSYPLSLVLEHKFKEWMDSSPAGFYFSNYQNPYVRKDLHDKVLSQKFEPPKMNQWNKVLKSLIECAYDMYFEQRHVKNLYKYHNIYNINNKLMLMRDSIDLYKTHFDDVLFFADIFNMRKYMTATPVYKKVKDRVYHTLHSITGNSVNFYKYGIIYGFKVNKEILKEVVDELYSIYNFNTDIFTDTSFLQTVYLLFRRIEETYRTQRRDDKISVNNVFFMNVVNNYSKLNKEEREIEIHNSMASRYYAKTMFAAFQMLFSTMLSNNVDNLDKAYGLSENIQVATSTSAFLTFAYVYNGSIMDSVTNSLLPPYAKKPITQLKYGKTFVFSNYFMLASKMYDMLNYKNLSLLCEYQAVASANFYSAKKVGQFIGRKFLPITTYFLVMRISWTHAFTTGQHLICAFDPKGCTADCKNSAPCYKSPESFFFTHALAAEASKYLFFYFFTNLYLDAYKSFPGGFGPAIKEQTQHVQEQTYERKPSVHSFNRNFFMELANGFMYAFCFFAISQMYAYFENINFYITSNFRFLDRYYGVFNKYFINYARIKLKEITSDLLIKYEREAYLSMKKYGYLGEVIAARLSPKDKIMNYVHETNDDVMSNLRRYDMENAFKNKMSTYVDDFAFFDDCGKNEQFLNERCDYCPVIEEVEETQLFTTTGDKNTNKTTEIKKQTSTYIDTEKMNEADSADSDDEKDSDTPDDELMISRFH.

The first 24 residues, 1 to 24 (MVSFFKTPIFILIIFLYLNEKVIC), serve as a signal peptide directing secretion. Intrachain disulfides connect C333-C361, C407-C413, C517-C545, and C521-C542. The helical transmembrane segment at 1204 to 1224 (LANGFMYAFCFFAISQMYAYF) threads the bilayer. Residues 1383 to 1417 (TYIDTEKMNEADSADSDDEKDSDTPDDELMISRFH) are disordered. The segment covering 1394-1411 (DSADSDDEKDSDTPDDEL) has biased composition (acidic residues).

As to quaternary structure, self-associates. Component of the RhopH complex. RhopH complex is at least composed of CLAG3.1/CLAG3.2, RhopH2 and RhopH3 with a 1:1:1 subunit stoichiometry. CLAG3.1/CLAG3.2 mediates subunit association through independent contacts with RhopH2 and RhopH3, which do not directly interact with one another. Interacts with RhopH2. Interacts with RhopH3.

Its subcellular location is the host cell membrane. The protein localises to the host cytoplasm. It is found in the cytoplasmic vesicle. It localises to the secretory vesicle. The protein resides in the rhoptry. Functionally, participates in the formation of new permeability pathways in Plasmodium-infected erythrocytes enabling the uptake of nutrients from the blood plasma. This is Cytoadherence-linked asexual protein 3.1 from Plasmodium falciparum.